The following is a 345-amino-acid chain: Homeobox-leucine zipper protein HOX16 (345 aa).

The segment at residues 76-135 (LPEKKRRLTPEQVHLLERSFEEENKLEPERKTELARKLGLQPRQVAVWFQNRRARWKTKQ) is a DNA-binding region (homeobox). A leucine-zipper region spans residues 134–178 (KQLERDFDRLKASFDALRADHDALLQDNHRLHSQVMSLTEKLQEK). Residues 220 to 241 (FEEQQEQQVKAEDRLSTGSGGS) are disordered.

This sequence belongs to the HD-ZIP homeobox family. Class I subfamily. As to expression, expressed in seedlings, stems, leaf sheaths and blades and panicles.

It is found in the nucleus. Its function is as follows. Probable transcription factor. In Oryza sativa subsp. indica (Rice), this protein is Homeobox-leucine zipper protein HOX16 (HOX16).